Here is a 433-residue protein sequence, read N- to C-terminus: MVISPSLSALHTLAHNARQAALHLGSLNTAERNQAIAAIADGLTAAMPEILAANQEDCAAAEAMGIAKPLYNRLLLGESKLKSTIAGVKDVEHLPDPLGQVTLHRQLDEGLVLKRVGCPLGVLGVIFEARPEALIQISSLAIKSGNAVILKGGREATRSCQVLTEVIQTALAKTVVSPEAINLLTTREEIRELLGLNQYVDLIIPRGSNEFVQYIQQNTQIPVLGHADGICHLYLDAQADLSKAIPITVDAKTQYPAACNAIETLLVHQAIAAEFLPPLAQALGEKGVSLRGDSGTQKLIDCEPATEADWCTEYSDLILSIKIVDSLEAAIDHINQYGSKHTDGIISEDLTAAEQFCQRVDSAGVYHNCSTRFADGFRYGFGAEVGISTQKMPPRGPVGLEGLVTYKYQLWGHGHIAATYTGQGAKAFTHLDL.

It belongs to the gamma-glutamyl phosphate reductase family.

It is found in the cytoplasm. It catalyses the reaction L-glutamate 5-semialdehyde + phosphate + NADP(+) = L-glutamyl 5-phosphate + NADPH + H(+). The protein operates within amino-acid biosynthesis; L-proline biosynthesis; L-glutamate 5-semialdehyde from L-glutamate: step 2/2. Catalyzes the NADPH-dependent reduction of L-glutamate 5-phosphate into L-glutamate 5-semialdehyde and phosphate. The product spontaneously undergoes cyclization to form 1-pyrroline-5-carboxylate. The sequence is that of Gamma-glutamyl phosphate reductase 1 from Synechocystis sp. (strain ATCC 27184 / PCC 6803 / Kazusa).